Here is a 257-residue protein sequence, read N- to C-terminus: Deoxyribose-phosphate aldolase (257 aa).

Aspartate 102 serves as the catalytic Proton donor/acceptor. Lysine 166 serves as the catalytic Schiff-base intermediate with acetaldehyde. Lysine 198 functions as the Proton donor/acceptor in the catalytic mechanism.

This sequence belongs to the DeoC/FbaB aldolase family. DeoC type 2 subfamily.

The protein localises to the cytoplasm. It catalyses the reaction 2-deoxy-D-ribose 5-phosphate = D-glyceraldehyde 3-phosphate + acetaldehyde. It functions in the pathway carbohydrate degradation; 2-deoxy-D-ribose 1-phosphate degradation; D-glyceraldehyde 3-phosphate and acetaldehyde from 2-deoxy-alpha-D-ribose 1-phosphate: step 2/2. In terms of biological role, catalyzes a reversible aldol reaction between acetaldehyde and D-glyceraldehyde 3-phosphate to generate 2-deoxy-D-ribose 5-phosphate. In Shewanella amazonensis (strain ATCC BAA-1098 / SB2B), this protein is Deoxyribose-phosphate aldolase.